The following is a 137-amino-acid chain: Fluoride-specific ion channel FluC (137 aa).

The next 4 membrane-spanning stretches (helical) occupy residues 11–31, 42–62, 75–95, and 107–127; these read IAVS…SLWF, GTLF…ALAL, LIAV…LDTF, and GFYW…GIIL. G82 and T85 together coordinate Na(+).

This sequence belongs to the fluoride channel Fluc/FEX (TC 1.A.43) family.

The protein localises to the cell inner membrane. The catalysed reaction is fluoride(in) = fluoride(out). Its activity is regulated as follows. Na(+) is not transported, but it plays an essential structural role and its presence is essential for fluoride channel function. Its function is as follows. Fluoride-specific ion channel. Important for reducing fluoride concentration in the cell, thus reducing its toxicity. The chain is Fluoride-specific ion channel FluC from Trichormus variabilis (strain ATCC 29413 / PCC 7937) (Anabaena variabilis).